A 707-amino-acid chain; its full sequence is UvrABC system protein C (707 aa).

The GIY-YIG domain occupies 14–94 (AEPGCYLMKD…IKKHRPRFNV (81 aa)). A UVR domain is found at 206 to 241 (GELVERLRGRMAGAAEGLRFEEAARLRDQLQAVERS). Residues 655 to 707 (DAPPIAADEPSGAPAGAPGGGPAEASPEAVAAATEAEIDAALADEDASPEPAA) are disordered. Low complexity-rich tracts occupy residues 660 to 670 (AADEPSGAPAG) and 677 to 689 (AEASPEAVAAATE). Acidic residues predominate over residues 690 to 707 (AEIDAALADEDASPEPAA).

It belongs to the UvrC family. In terms of assembly, interacts with UvrB in an incision complex.

It localises to the cytoplasm. Functionally, the UvrABC repair system catalyzes the recognition and processing of DNA lesions. UvrC both incises the 5' and 3' sides of the lesion. The N-terminal half is responsible for the 3' incision and the C-terminal half is responsible for the 5' incision. The chain is UvrABC system protein C from Anaeromyxobacter dehalogenans (strain 2CP-1 / ATCC BAA-258).